Consider the following 120-residue polypeptide: Chaperonin GroEL (120 aa).

23–27 (DGTTT) serves as a coordination point for ATP.

This sequence belongs to the chaperonin (HSP60) family. In terms of assembly, forms a cylinder of 14 subunits composed of two heptameric rings stacked back-to-back. Interacts with the co-chaperonin GroES.

Its subcellular location is the cytoplasm. It carries out the reaction ATP + H2O + a folded polypeptide = ADP + phosphate + an unfolded polypeptide.. In terms of biological role, together with its co-chaperonin GroES, plays an essential role in assisting protein folding. The GroEL-GroES system forms a nano-cage that allows encapsulation of the non-native substrate proteins and provides a physical environment optimized to promote and accelerate protein folding. The chain is Chaperonin GroEL from Mycolicibacterium fallax (Mycobacterium fallax).